A 407-amino-acid chain; its full sequence is Indoleamine 2,3-dioxygenase 1 (407 aa).

Position 350 (His-350) interacts with heme b. Residues 362 to 388 form a disordered region; it reads SKQKPMGGHKSEEPSNTENRGTGGTDV.

Belongs to the indoleamine 2,3-dioxygenase family. Monomer. The cofactor is heme b.

It is found in the cytoplasm. Its subcellular location is the cytosol. It catalyses the reaction D-tryptophan + O2 = N-formyl-D-kynurenine. The catalysed reaction is L-tryptophan + O2 = N-formyl-L-kynurenine. Activity is inhibited by and MTH-trp (methylthiohydantoin-DL-tryptophan), modestly inhibited by L-1MT (1-methyl-L-tryptophan) but not D-1MT (1-methyl-D-tryptophan). Its function is as follows. Catalyzes the first and rate limiting step of the catabolism of the essential amino acid tryptophan along the kynurenine pathway. Involved in the peripheral immune tolerance, contributing to maintain homeostasis by preventing autoimmunity or immunopathology that would result from uncontrolled and overreacting immune responses. Tryptophan shortage inhibits T lymphocytes division and accumulation of tryptophan catabolites induces T-cell apoptosis and differentiation of regulatory T-cells. Acts as a suppressor of anti-tumor immunity. Limits the growth of intracellular pathogens by depriving tryptophan. Protects the fetus from maternal immune rejection. This Rattus norvegicus (Rat) protein is Indoleamine 2,3-dioxygenase 1.